We begin with the raw amino-acid sequence, 65 residues long: MVSVQINDNESIDKMLKRFKKKYERAGVLKEFRANAYFVKPSVDGRLKRSRSRRRAQRANEERNS.

A disordered region spans residues 45 to 65 (GRLKRSRSRRRAQRANEERNS). Residues 48 to 57 (KRSRSRRRAQ) show a composition bias toward basic residues.

The protein belongs to the bacterial ribosomal protein bS21 family.

The polypeptide is Small ribosomal subunit protein bS21 (Pelodictyon phaeoclathratiforme (strain DSM 5477 / BU-1)).